The sequence spans 145 residues: uncharacterized protein (145 aa).

Residues 1–25 (MSENNENDGFNLDPDVKEELEETKS) are disordered. The span at 14-25 (PDVKEELEETKS) shows a compositional bias: basic and acidic residues.

This is an uncharacterized protein from His1 virus (isolate Australia/Victoria) (His1V).